The sequence spans 89 residues: Small ribosomal subunit protein uS15 (89 aa).

It belongs to the universal ribosomal protein uS15 family. As to quaternary structure, part of the 30S ribosomal subunit. Forms a bridge to the 50S subunit in the 70S ribosome, contacting the 23S rRNA.

Its function is as follows. One of the primary rRNA binding proteins, it binds directly to 16S rRNA where it helps nucleate assembly of the platform of the 30S subunit by binding and bridging several RNA helices of the 16S rRNA. Functionally, forms an intersubunit bridge (bridge B4) with the 23S rRNA of the 50S subunit in the ribosome. The protein is Small ribosomal subunit protein uS15 of Chlorobium chlorochromatii (strain CaD3).